Here is a 793-residue protein sequence, read N- to C-terminus: Putative glutamate--cysteine ligase 2-3 (793 aa).

A carboxylate-amine ligase region spans residues 1–407; that stretch reads MLASDPRKVG…RFWDRGDTAD (407 aa). Residues 367–390 form a disordered region; the sequence is TEHLPDVEVPPPREPGPKSTGAGR. Residues 408–793 form a peptidase M20 region; that stretch reads MTWTESTELD…ALTRLEDQSG (386 aa).

In the C-terminal section; belongs to the glutamate--cysteine ligase type 2 family. YbdK subfamily.

The catalysed reaction is L-cysteine + L-glutamate + ATP = gamma-L-glutamyl-L-cysteine + ADP + phosphate + H(+). Functionally, ATP-dependent carboxylate-amine ligase which exhibits weak glutamate--cysteine ligase activity. This is Putative glutamate--cysteine ligase 2-3 from Rhodococcus jostii (strain RHA1).